Consider the following 354-residue polypeptide: Chorismate synthase (354 aa).

Residue Arg-48 participates in NADP(+) binding. Residues 125–127 (RSS), 239–240 (NA), Gly-280, 295–299 (KPVAT), and Arg-321 contribute to the FMN site.

Belongs to the chorismate synthase family. In terms of assembly, homotetramer. Requires FMNH2 as cofactor.

It carries out the reaction 5-O-(1-carboxyvinyl)-3-phosphoshikimate = chorismate + phosphate. It participates in metabolic intermediate biosynthesis; chorismate biosynthesis; chorismate from D-erythrose 4-phosphate and phosphoenolpyruvate: step 7/7. Its function is as follows. Catalyzes the anti-1,4-elimination of the C-3 phosphate and the C-6 proR hydrogen from 5-enolpyruvylshikimate-3-phosphate (EPSP) to yield chorismate, which is the branch point compound that serves as the starting substrate for the three terminal pathways of aromatic amino acid biosynthesis. This reaction introduces a second double bond into the aromatic ring system. The protein is Chorismate synthase of Christiangramia forsetii (strain DSM 17595 / CGMCC 1.15422 / KT0803) (Gramella forsetii).